Here is a 231-residue protein sequence, read N- to C-terminus: MFYPYNYSNLNVSTMPALPGISAFDGMQDEENVEISPERKYQTLLPVLTNSHVVENELKHKLNKTAFDFRYQTKSENGSEKWEPKYLITPNLQTRSVSFDNSSVQYNSDSSEKSSLSQLTCNSSIIQQPENGIVSNDAYNKMANSRYSLKTRKQRTDPRNTLSDEEDLEQRRKYICKICARGFTTSGHLARHNRIHTGEKNHCCPYKGCTQRFSRHDNCLQHYRTHLKKGQ.

Ser163 is modified (phosphoserine). C2H2-type zinc fingers lie at residues 174 to 196 and 202 to 226; these read YICK…NRIH and HCCP…YRTH.

It localises to the nucleus. In terms of biological role, transcriptional repressor involved in regulation of glucose repression. Binds to UAS-1 in the STA1 promoter. The protein is Transcriptional regulator NRG1 (NRG1) of Saccharomyces cerevisiae (strain ATCC 204508 / S288c) (Baker's yeast).